Reading from the N-terminus, the 216-residue chain is Capsule polysaccharide export ATP-binding protein CtrD (216 aa).

Positions 2–215 (ISVEHVSKRY…DKAYEYYNSL (214 aa)) constitute an ABC transporter domain. 38–45 (GRNGAGKS) contacts ATP.

The protein belongs to the ABC transporter superfamily.

It localises to the cell inner membrane. The catalysed reaction is ATP + H2O + capsular polysaccharide-[capsular polysaccharide-binding protein]Side 1 = ADP + phosphate + capsular polysaccharideSide 2 + [capsular polysaccharide-binding protein]Side 1.. In terms of biological role, putative ATP-binding protein, and an energy-coupling component of capsule polysaccharide export apparatus. This chain is Capsule polysaccharide export ATP-binding protein CtrD (ctrD), found in Neisseria meningitidis serogroup B (strain ATCC BAA-335 / MC58).